Consider the following 1387-residue polypeptide: Kinesin-like protein KIF15-B (1387 aa).

The Kinesin motor domain occupies Ala-26–Ile-364. Gly-110–Thr-117 provides a ligand contact to ATP. Residues Val-369 to Cys-1383 are a coiled coil. The interval Asn-1138–Asp-1387 is necessary for its targeting to microtubule minus ends.

It belongs to the TRAFAC class myosin-kinesin ATPase superfamily. Kinesin family. KLP2 subfamily. In terms of assembly, homodimer. Dimerization is required for targeting to microtubule minus ends. Found in a complex with tpx2 and microtubules. Its association with microtubules and targeting to microtubule minus ends requires tpx2. Strongly expressed in testis and weakly in lung (at protein level).

Its subcellular location is the cytoplasm. It localises to the cytoskeleton. The protein resides in the microtubule organizing center. It is found in the centrosome. The protein localises to the spindle. Its subcellular location is the spindle pole. Plus-end directed kinesin-like motor enzyme involved in mitotic spindle assembly. Required for centrosome separation and maintenance of spindle bipolarity during mitosis. This is Kinesin-like protein KIF15-B (kif15-b) from Xenopus laevis (African clawed frog).